The primary structure comprises 230 residues: Lipoprotein-releasing system ATP-binding protein LolD (230 aa).

Residues 10–228 (LRAEHLSKVY…QLHMANGRLL (219 aa)) enclose the ABC transporter domain. 46-53 (GASGSGKS) contacts ATP.

It belongs to the ABC transporter superfamily. Lipoprotein translocase (TC 3.A.1.125) family. The complex is composed of two ATP-binding proteins (LolD) and two transmembrane proteins (LolC and LolE).

The protein localises to the cell inner membrane. In terms of biological role, part of the ABC transporter complex LolCDE involved in the translocation of mature outer membrane-directed lipoproteins, from the inner membrane to the periplasmic chaperone, LolA. Responsible for the formation of the LolA-lipoprotein complex in an ATP-dependent manner. This is Lipoprotein-releasing system ATP-binding protein LolD from Bordetella avium (strain 197N).